The primary structure comprises 545 residues: Myotubularin-related protein 9 (545 aa).

Position 1 is an N-acetylmethionine (M1). The GRAM domain maps to 4 to 99 (AELIKTPRVD…LNIASSIEAL (96 aa)). Residues 123-498 (GWHSFLPEQE…QSLQLWEGIF (376 aa)) form the Myotubularin phosphatase domain. Residues 508–542 (LDEAYEEMVNIIEYNKELQAKVNVLRRQLAELETE) adopt a coiled-coil conformation.

The protein belongs to the protein-tyrosine phosphatase family. Non-receptor class myotubularin subfamily. Homodimer. Heterodimer (via C-terminus) with lipid phosphatase MTMR6 (via C-terminus). Heterodimer (via coiled coil domain) with lipid phosphatase MTMR7 (via C-terminus).

The protein localises to the cytoplasm. The protein resides in the cell projection. It is found in the ruffle membrane. Its subcellular location is the perinuclear region. It localises to the endoplasmic reticulum. Its function is as follows. Acts as an adapter for myotubularin-related phosphatases. Increases lipid phosphatase MTMR6 catalytic activity, specifically towards phosphatidylinositol 3,5-bisphosphate, and MTMR6 binding affinity for phosphorylated phosphatidylinositols. Positively regulates lipid phosphatase MTMR7 catalytic activity. The formation of the MTMR6-MTMR9 complex, stabilizes both MTMR6 and MTMR9 protein levels. Plays a role in the late stages of macropinocytosis possibly by regulating MTMR6-mediated dephosphorylation of phosphatidylinositol 3-phosphate in membrane ruffles. Negatively regulates DNA damage-induced apoptosis, in part via its association with MTMR6. Does not bind mono-, di- and tri-phosphorylated phosphatidylinositols, phosphatidic acid and phosphatidylserine. The chain is Myotubularin-related protein 9 (Mtmr9) from Mus musculus (Mouse).